A 111-amino-acid chain; its full sequence is Photosystem II reaction center Psb28 protein (111 aa).

This sequence belongs to the Psb28 family. In terms of assembly, part of the photosystem II complex.

It is found in the cellular thylakoid membrane. This Gloeothece citriformis (strain PCC 7424) (Cyanothece sp. (strain PCC 7424)) protein is Photosystem II reaction center Psb28 protein.